The sequence spans 334 residues: Leucine carboxyl methyltransferase 1 (334 aa).

Residues Lys-37, Arg-73, Gly-98, Asp-122, 171–172 (DL), and Glu-198 contribute to the S-adenosyl-L-methionine site.

It belongs to the methyltransferase superfamily. LCMT family.

It catalyses the reaction [phosphatase 2A protein]-C-terminal L-leucine + S-adenosyl-L-methionine = [phosphatase 2A protein]-C-terminal L-leucine methyl ester + S-adenosyl-L-homocysteine. In terms of biological role, methylates the carboxyl group of the C-terminal leucine residue of protein phosphatase 2A catalytic subunits to form alpha-leucine ester residues. The protein is Leucine carboxyl methyltransferase 1 (LCMT1) of Homo sapiens (Human).